Reading from the N-terminus, the 195-residue chain is Segregation and condensation protein B (195 aa).

The protein belongs to the ScpB family. As to quaternary structure, homodimer. Homodimerization may be required to stabilize the binding of ScpA to the Smc head domains. Component of a cohesin-like complex composed of ScpA, ScpB and the Smc homodimer, in which ScpA and ScpB bind to the head domain of Smc. The presence of the three proteins is required for the association of the complex with DNA.

The protein localises to the cytoplasm. Participates in chromosomal partition during cell division. May act via the formation of a condensin-like complex containing Smc and ScpA that pull DNA away from mid-cell into both cell halves. This is Segregation and condensation protein B from Clostridium perfringens (strain SM101 / Type A).